The chain runs to 89 residues: Small ribosomal subunit protein uS14A (89 aa).

This sequence belongs to the universal ribosomal protein uS14 family. In terms of assembly, part of the 30S ribosomal subunit. Contacts proteins S3 and S10.

Binds 16S rRNA, required for the assembly of 30S particles and may also be responsible for determining the conformation of the 16S rRNA at the A site. The polypeptide is Small ribosomal subunit protein uS14A (Ligilactobacillus salivarius (strain UCC118) (Lactobacillus salivarius)).